The primary structure comprises 360 residues: Isopentenyl-diphosphate delta-isomerase (360 aa).

6-7 (RK) serves as a coordination point for substrate. Residues threonine 62, 63–65 (GMT), serine 93, and asparagine 122 contribute to the FMN site. 93 to 95 (SQR) serves as a coordination point for substrate. A substrate-binding site is contributed by glutamine 157. Glutamate 158 serves as a coordination point for Mg(2+). Residues lysine 189, serine 214, threonine 219, 272–274 (GIR), and 293–294 (AL) contribute to the FMN site.

This sequence belongs to the IPP isomerase type 2 family. In terms of assembly, homooctamer. Dimer of tetramers. The cofactor is FMN. Requires NADPH as cofactor. It depends on Mg(2+) as a cofactor.

The protein resides in the cytoplasm. The enzyme catalyses isopentenyl diphosphate = dimethylallyl diphosphate. Involved in the biosynthesis of isoprenoids. Catalyzes the 1,3-allylic rearrangement of the homoallylic substrate isopentenyl (IPP) to its allylic isomer, dimethylallyl diphosphate (DMAPP). The polypeptide is Isopentenyl-diphosphate delta-isomerase (Ignicoccus hospitalis (strain KIN4/I / DSM 18386 / JCM 14125)).